A 292-amino-acid polypeptide reads, in one-letter code: Alpha-soluble NSF attachment protein (292 aa).

Belongs to the SNAP family.

The protein resides in the cytoplasmic vesicle. It is found in the membrane. Required for vesicular transport between the endoplasmic reticulum and the Golgi apparatus. Also between the endosome and phagosome. This is Alpha-soluble NSF attachment protein from Drosophila melanogaster (Fruit fly).